Reading from the N-terminus, the 326-residue chain is Eukaryotic translation initiation factor 2 subunit 1 (326 aa).

The 72-residue stretch at 24–95 folds into the S1 motif domain; sequence DDLIMVKVNR…QKGYIDLSKR (72 aa). Ser-59 is modified (phosphoserine; by eIK1, eIK2 and PK4). Residues 291–326 form a disordered region; that stretch reads LDKHDGLSSDDEYSSDGDEDDSSNDDDNSSDEDDDD. Residues 298 to 326 show a composition bias toward acidic residues; the sequence is SSDDEYSSDGDEDDSSNDDDNSSDEDDDD.

This sequence belongs to the eIF-2-alpha family. In terms of processing, phosphorylates at Ser-59 in mature trophozoites, schizonts and gametocytes but not in rings and young trophozoites. Phosphorylates at Ser-59 by eIK2 in salivary gland sporozoites but not in midgut and hemocoel sporozoites. Dephosphorylated at Ser-59 by UIS2. Phosphorylation of eIF2alpha subunit of the pre-initiation complex eIF2 inhibits recycling of inactive eIF2-GDP to active eIF2-GTP by limiting the activity of the guanine nucleotide exchange factor eIF2B and thus, inhibits protein translation.

It localises to the cytoplasm. The protein localises to the stress granule. In terms of biological role, functions in the early steps of protein synthesis by forming a ternary complex with GTP and initiator tRNA. May regulate protein translation in response to amino acid starvation. May regulate protein at various stages of parasite development. The sequence is that of Eukaryotic translation initiation factor 2 subunit 1 from Plasmodium berghei (strain Anka).